Consider the following 180-residue polypeptide: Large ribosomal subunit protein uL5 (180 aa).

Belongs to the universal ribosomal protein uL5 family. In terms of assembly, part of the 50S ribosomal subunit; part of the 5S rRNA/L5/L18/L25 subcomplex. Contacts the 5S rRNA and the P site tRNA. Forms a bridge to the 30S subunit in the 70S ribosome.

Its function is as follows. This is one of the proteins that bind and probably mediate the attachment of the 5S RNA into the large ribosomal subunit, where it forms part of the central protuberance. In the 70S ribosome it contacts protein S13 of the 30S subunit (bridge B1b), connecting the 2 subunits; this bridge is implicated in subunit movement. Contacts the P site tRNA; the 5S rRNA and some of its associated proteins might help stabilize positioning of ribosome-bound tRNAs. The polypeptide is Large ribosomal subunit protein uL5 (Lactococcus lactis subsp. lactis (strain IL1403) (Streptococcus lactis)).